The chain runs to 513 residues: Histidine ammonia-lyase (513 aa).

Positions Ala-142–Gly-144 form a cross-link, 5-imidazolinone (Ala-Gly). Residue Ser-143 is modified to 2,3-didehydroalanine (Ser).

It belongs to the PAL/histidase family. Contains an active site 4-methylidene-imidazol-5-one (MIO), which is formed autocatalytically by cyclization and dehydration of residues Ala-Ser-Gly.

It localises to the cytoplasm. It carries out the reaction L-histidine = trans-urocanate + NH4(+). It participates in amino-acid degradation; L-histidine degradation into L-glutamate; N-formimidoyl-L-glutamate from L-histidine: step 1/3. The polypeptide is Histidine ammonia-lyase (Roseobacter denitrificans (strain ATCC 33942 / OCh 114) (Erythrobacter sp. (strain OCh 114))).